The chain runs to 244 residues: Inner kinetochore subunit fta7 (244 aa).

This sequence belongs to the CENP-Q/OKP1 family. In terms of assembly, component of the heterotetrameric kinetochore subcomplex COMA, which consists of fta2, fta7, mal2 and mis17. The COMA subcomplex is part of a larger constitutive centromere-associated network (CCAN) (also known as central kinetochore Sim4 complex in fission yeast), which is composed of at least cnl2, cnp3, cnp20, fta1, fta2, fta3, fta4, fta6, fta7, mal2, mhf1, mhf2, mis6, mis15, mis17, sim4 and wip1.

It is found in the nucleus. It localises to the chromosome. The protein localises to the centromere. The protein resides in the kinetochore. Its subcellular location is the cytoplasm. It is found in the cytoskeleton. It localises to the microtubule organizing center. The protein localises to the spindle pole body. In terms of biological role, component of the kinetochore, a multiprotein complex that assembles on centromeric DNA and attaches chromosomes to spindle microtubules, mediating chromosome segregation and sister chromatid segregation during meiosis and mitosis. Component of the inner kinetochore COMA complex, which connects centromere-associated proteins and the outer kinetochore. COMA interacts with other inner kinetochore proteins to form the inner kinetochore constitutive centromere-associated network (CCAN), which serves as a structural platform for outer kinetochore assembly. In Schizosaccharomyces pombe (strain 972 / ATCC 24843) (Fission yeast), this protein is Inner kinetochore subunit fta7 (fta7).